A 466-amino-acid polypeptide reads, in one-letter code: MTASQDFVVKDISLADWGRRELDIAETEMPGLMAAREEFGKSQPLKGARISGSLHMTIQTAVLIETLKVLGAEVRWASCNIFSTQDHAAAAIAATGTPVFAVKGETLEEYWTYTDQIFQWPDGEPSNMILDDGGDATMYILIGARAEAGEDVLSNPQSEEEEVLFAQIKKRMAATPGFFTKQRAAIKGVTEETTTGVNRLYQLQKKGLLPFPAINVNDSVTKSKFDNKYGCKESLVDGIRRGTDVMMAGKVAVVCGYGDVGKGSAQSLAGAGARVKVTEVDPICALQAAMDGFEVVTLDDAASTADIVVTTTGNKDVITIDHMRKMKDMCIVGNIGHFDNEIQVAALRNLKWTNVKPQVDLIEFPDGKRLILLSEGRLLNLGNATGHPSFVMSASFTNQVLGQIELFTRTDAYKNEVYVLPKHLDEKVARLHLDKLGAKLTVLSEEQAAYIGVTPQGPFKSEHYRY.

Positions 57, 132, and 192 each coordinate substrate. Residue 193–195 (TTT) coordinates NAD(+). Substrate-binding residues include Lys222 and Asp226. NAD(+)-binding positions include Asn227, 256–261 (GYGDVG), Glu279, Asn314, 335–337 (IGH), and Asn380.

The protein belongs to the adenosylhomocysteinase family. It depends on NAD(+) as a cofactor.

The protein localises to the cytoplasm. It catalyses the reaction S-adenosyl-L-homocysteine + H2O = L-homocysteine + adenosine. The protein operates within amino-acid biosynthesis; L-homocysteine biosynthesis; L-homocysteine from S-adenosyl-L-homocysteine: step 1/1. Functionally, may play a key role in the regulation of the intracellular concentration of adenosylhomocysteine. This chain is Adenosylhomocysteinase, found in Brucella melitensis biotype 2 (strain ATCC 23457).